A 61-amino-acid polypeptide reads, in one-letter code: UPF0434 protein Pfl01_4174 (61 aa).

The protein belongs to the UPF0434 family.

The chain is UPF0434 protein Pfl01_4174 from Pseudomonas fluorescens (strain Pf0-1).